Here is a 259-residue protein sequence, read N- to C-terminus: Hemin import ATP-binding protein HmuV (259 aa).

One can recognise an ABC transporter domain in the interval Ile-2–Gln-238. Gly-34 to Ser-41 contacts ATP.

This sequence belongs to the ABC transporter superfamily. Heme (hemin) importer (TC 3.A.1.14.5) family. The complex is composed of two ATP-binding proteins (HmuV), two transmembrane proteins (HmuU) and a solute-binding protein (HmuT).

The protein localises to the cell inner membrane. Its function is as follows. Part of the ABC transporter complex HmuTUV involved in hemin import. Responsible for energy coupling to the transport system. The protein is Hemin import ATP-binding protein HmuV of Chelativorans sp. (strain BNC1).